A 465-amino-acid chain; its full sequence is Cysteine--tRNA ligase (465 aa).

Cys-28 provides a ligand contact to Zn(2+). A 'HIGH' region motif is present at residues 30–40 (MTVYDYCHLGH). The Zn(2+) site is built by Cys-209, His-234, and Glu-238. Residues 266-270 (KMSKS) carry the 'KMSKS' region motif. An ATP-binding site is contributed by Lys-269.

The protein belongs to the class-I aminoacyl-tRNA synthetase family. As to quaternary structure, monomer. Zn(2+) serves as cofactor.

Its subcellular location is the cytoplasm. The catalysed reaction is tRNA(Cys) + L-cysteine + ATP = L-cysteinyl-tRNA(Cys) + AMP + diphosphate. The sequence is that of Cysteine--tRNA ligase from Nitrosomonas europaea (strain ATCC 19718 / CIP 103999 / KCTC 2705 / NBRC 14298).